The following is a 45-amino-acid chain: AESTVKQAPVXAVAKAYNDYEEYSLGPEGLKDAMEXTGSNALVMD.

As to quaternary structure, one of 3 components (of 35, 45 and 105 kDa) of the enterotoxin.

One of 3 components required for cytotoxicity (tested in African green monkey Vero cells); the complex is not hemolytic. This chain is Enterotoxin, found in Bacillus cereus.